Consider the following 85-residue polypeptide: Putative sodium channel toxin Ts34 (85 aa).

The signal sequence occupies residues 1-17 (MNLPLLLLITILIEIHA). One can recognise an LCN-type CS-alpha/beta domain in the interval 19-82 (KDGYVIYKNS…IYGETGSYCW (64 aa)). Cystine bridges form between cysteine 30–cysteine 81, cysteine 34–cysteine 57, cysteine 43–cysteine 62, and cysteine 47–cysteine 64.

Belongs to the long (4 C-C) scorpion toxin superfamily. Sodium channel inhibitor family. Expressed by the venom gland.

Its subcellular location is the secreted. In terms of biological role, putative sodium channel toxin. In Tityus serrulatus (Brazilian scorpion), this protein is Putative sodium channel toxin Ts34.